Consider the following 740-residue polypeptide: 1,4-alpha-glucan branching enzyme GlgB (740 aa).

D419 serves as the catalytic Nucleophile. E472 (proton donor) is an active-site residue.

It belongs to the glycosyl hydrolase 13 family. GlgB subfamily. Monomer.

It carries out the reaction Transfers a segment of a (1-&gt;4)-alpha-D-glucan chain to a primary hydroxy group in a similar glucan chain.. It participates in glycan biosynthesis; glycogen biosynthesis. Its function is as follows. Catalyzes the formation of the alpha-1,6-glucosidic linkages in glycogen by scission of a 1,4-alpha-linked oligosaccharide from growing alpha-1,4-glucan chains and the subsequent attachment of the oligosaccharide to the alpha-1,6 position. In Thiobacillus denitrificans (strain ATCC 25259 / T1), this protein is 1,4-alpha-glucan branching enzyme GlgB.